Consider the following 207-residue polypeptide: Large ribosomal subunit protein uL4 (207 aa).

The disordered stretch occupies residues 44 to 76 (RRQGTQSTKTKSEVRGGGKKPWRQKGTGRARQG). Positions 60-71 (GGKKPWRQKGTG) are enriched in basic residues.

It belongs to the universal ribosomal protein uL4 family. Part of the 50S ribosomal subunit.

In terms of biological role, one of the primary rRNA binding proteins, this protein initially binds near the 5'-end of the 23S rRNA. It is important during the early stages of 50S assembly. It makes multiple contacts with different domains of the 23S rRNA in the assembled 50S subunit and ribosome. Functionally, forms part of the polypeptide exit tunnel. The polypeptide is Large ribosomal subunit protein uL4 (Ruminiclostridium cellulolyticum (strain ATCC 35319 / DSM 5812 / JCM 6584 / H10) (Clostridium cellulolyticum)).